A 160-amino-acid chain; its full sequence is MKSLQKGFTLIELMIVVAIIGILAAFAIPAYNDYIARTQVSEGVSLADGLKIRIADNLQDGDCTTKGDASTGEVGNEDKGKYALATIEGTPAANLSELKAEEKNGCLVKIEYGKGTSGGSVSALINNTELVLAQLANGSYVKESATVKDKFLPKALKETK.

The propeptide at 1–7 (MKSLQKG) is leader sequence. F8 carries the post-translational modification N-methylphenylalanine. Residues 8–28 (FTLIELMIVVAIIGILAAFAI) form a helical membrane-spanning segment. C63 and C106 are oxidised to a cystine.

This sequence belongs to the N-Me-Phe pilin family. The pili are polar flexible filaments of about 5.4 nanometers diameter and 2.5 micrometers average length; they consist of only a single polypeptide chain arranged in a helical configuration of five subunits per turn in the assembled pilus.

The protein localises to the fimbrium. It localises to the membrane. In terms of biological role, major component of the type IV fimbriae that plays an essential role in twitching motility, natural transformation, and protease secretion. The protein is Type IV major fimbrial protein FimA (fimA) of Dichelobacter nodosus (Bacteroides nodosus).